Here is a 557-residue protein sequence, read N- to C-terminus: Putative UDP-glucuronate:xylan alpha-glucuronosyltransferase 4 (557 aa).

A helical; Signal-anchor for type II membrane protein transmembrane segment spans residues 11 to 31 (KIFMIYLILVSLSLLGLILPF). Mn(2+) contacts are provided by Asp-365 and Asp-367. Substrate is bound by residues 365 to 367 (DAD), 394 to 396 (NSG), 421 to 425 (NGGDQ), and 466 to 471 (HYLGLK). His-466 serves as a coordination point for Mn(2+).

It belongs to the glycosyltransferase 8 family. Glycogenin subfamily. The cofactor is Mn(2+).

It is found in the golgi apparatus membrane. In terms of biological role, may be involved in the substitutions of the xylan backbone in stem glucuronoxylan. This chain is Putative UDP-glucuronate:xylan alpha-glucuronosyltransferase 4 (GUX4), found in Arabidopsis thaliana (Mouse-ear cress).